Here is a 1087-residue protein sequence, read N- to C-terminus: Error-prone DNA polymerase 3 (1087 aa).

A disordered region spans residues 1040-1064; sequence AGRGDEFAHGSPGSSDTRDKSKPVV.

It belongs to the DNA polymerase type-C family. DnaE2 subfamily.

The protein localises to the cytoplasm. It carries out the reaction DNA(n) + a 2'-deoxyribonucleoside 5'-triphosphate = DNA(n+1) + diphosphate. Functionally, DNA polymerase involved in damage-induced mutagenesis and translesion synthesis (TLS). It is not the major replicative DNA polymerase. The chain is Error-prone DNA polymerase 3 from Agrobacterium fabrum (strain C58 / ATCC 33970) (Agrobacterium tumefaciens (strain C58)).